The primary structure comprises 375 residues: G-protein coupled estrogen receptor 1 (375 aa).

An N-acetylmethionine modification is found at M1. The Extracellular portion of the chain corresponds to 1-62 (MAATTPAQDV…QQYVIALFLS (62 aa)). 2 N-linked (GlcNAc...) asparagine glycosylation sites follow: N32 and N44. Residues 63-84 (CLYTIFLFPIGFVGNILILVVN) form a helical membrane-spanning segment. The Cytoplasmic portion of the chain corresponds to 85–96 (ISFREKMTIPDL). A helical transmembrane segment spans residues 97–120 (YFINLAAADLILVADSLIEVFNLD). Residues 121 to 132 (EQYYDIAVLCTF) are Extracellular-facing. Cysteines 130 and 207 form a disulfide. The helical transmembrane segment at 133-153 (MSLFLQINMYSSVFFLTWMSF) threads the bilayer. The Cytoplasmic portion of the chain corresponds to 154-175 (DRYLALAKAMRCGLFRTKHHAR). The helical transmembrane segment at 176-194 (LSCGLIWMASVSATLVPFT) threads the bilayer. Over 195-220 (AVHLRHTEEACFCFADVREVQWLEVT) the chain is Extracellular. The chain crosses the membrane as a helical span at residues 221–236 (LGFIVPFAIIGLCYSL). The Cytoplasmic portion of the chain corresponds to 237-259 (IVRALIRAHRHRGLRPRRQKALR). The chain crosses the membrane as a helical span at residues 260–280 (MIFAVVLVFFICWLPENVFIS). Topologically, residues 281–306 (VHLLQWAQPGDTPCKQSFRHAYPLTG) are extracellular. Residues 307–327 (HIVNLAAFSNSCLSPLIYSFL) traverse the membrane as a helical segment. Residues 328–375 (GETFRDKLRLYVAQKTSLPALNRFCHATLKAVIPDSTEQSDVKFSSAV) lie on the Cytoplasmic side of the membrane.

This sequence belongs to the G-protein coupled receptor 1 family. Homodimer. Heterodimer; heterodimerizes with other G-protein-coupled receptor (GPCRs) like CRHR1, HTR1A and PAQR8. Interacts with RAMP3; the interaction confers proper subcellular localization and function in cardioprotection. Interacts with KRT7 and KRT8. Interacts with EGFR; the interaction increases after agonist-induced stimulation in cancer-associated fibroblasts (CAF). Interacts with EGFR and ESR1. Interacts (via C-terminus tail motif) with DLG4 (via N-terminus tandem pair of PDZ domains); the interaction is direct and induces the increase of GPER1 protein levels residing at the plasma membrane surface in a estradiol-independent manner. Post-translationally, ubiquitinated; ubiquitination occurs at the plasma membrane and leads to proteasome-mediated degradation. In terms of processing, glycosylated. In terms of tissue distribution, expressed in the brain. Expressed in neurons of the hippocampus, hypothalamic paraventricular nucleus (PVN), supraoptic nucleus (SON) and the median eminence. Expressed in magnocellular neurosecretory cells (MNCs) which secrete oxytocin but not in MNCs which secrete vasopressin. Expressed in glial cells. Expressed in the nucleus ambiguous. Expressed in epithelial cells, in pachytene spermatocytes (PS) (at protein level). Expressed strongly in vascular endothelial cells and poorly in vascular smooth muscle cells (VSMC). Expressed in the brain, lung, pituitary gland, adrenal medulla, renal pelvis and ovary. Expressed in CA1 hippocampus. Expressed weakly in heart, skeletal muscle and kidney.

It is found in the nucleus. Its subcellular location is the cytoplasm. The protein resides in the perinuclear region. The protein localises to the cytoskeleton. It localises to the cytoplasmic vesicle membrane. It is found in the cell membrane. Its subcellular location is the basolateral cell membrane. The protein resides in the endoplasmic reticulum membrane. The protein localises to the early endosome. It localises to the recycling endosome. It is found in the golgi apparatus. Its subcellular location is the trans-Golgi network. The protein resides in the golgi apparatus membrane. The protein localises to the cell projection. It localises to the dendrite. It is found in the dendritic spine membrane. Its subcellular location is the axon. The protein resides in the postsynaptic density. The protein localises to the mitochondrion membrane. Functionally, G-protein coupled estrogen receptor that binds to 17-beta-estradiol (E2) with high affinity, leading to rapid and transient activation of numerous intracellular signaling pathways. Stimulates cAMP production, calcium mobilization and tyrosine kinase Src inducing the release of heparin-bound epidermal growth factor (HB-EGF) and subsequent transactivation of the epidermal growth factor receptor (EGFR), activating downstream signaling pathways such as PI3K/Akt and ERK/MAPK. Mediates pleiotropic functions among others in the cardiovascular, endocrine, reproductive, immune and central nervous systems. Has a role in cardioprotection by reducing cardiac hypertrophy and perivascular fibrosis in a RAMP3-dependent manner. Regulates arterial blood pressure by stimulating vasodilation and reducing vascular smooth muscle and microvascular endothelial cell proliferation. Plays a role in blood glucose homeostasis contributing to the insulin secretion response by pancreatic beta cells. Triggers mitochondrial apoptosis during pachytene spermatocyte differentiation. Stimulates uterine epithelial cell proliferation. Enhances uterine contractility in response to oxytocin. Contributes to thymic atrophy by inducing apoptosis. Attenuates TNF-mediated endothelial expression of leukocyte adhesion molecules. Promotes neuritogenesis in developing hippocampal neurons. Plays a role in acute neuroprotection against NMDA-induced excitotoxic neuronal death. Increases firing activity and intracellular calcium oscillations in luteinizing hormone-releasing hormone (LHRH) neurons. Inhibits early osteoblast proliferation at growth plate during skeletal development. Inhibits mature adipocyte differentiation and lipid accumulation. Involved in the recruitment of beta-arrestin 2 ARRB2 at the plasma membrane in epithelial cells. Also functions as a receptor for aldosterone mediating rapid regulation of vascular contractibility through the PI3K/ERK signaling pathway. Involved in cancer progression regulation. Stimulates cancer-associated fibroblast (CAF) proliferation by a rapid genomic response through the EGFR/ERK transduction pathway. Associated with EGFR, may act as a transcription factor activating growth regulatory genes (c-fos, cyclin D1). Promotes integrin alpha-5/beta-1 and fibronectin (FN) matrix assembly in breast cancer cells. The protein is G-protein coupled estrogen receptor 1 (Gper1) of Rattus norvegicus (Rat).